The chain runs to 359 residues: Nicotinate N-methyltransferase 1 (359 aa).

Aspartate 226 contacts S-adenosyl-L-methionine.

The protein belongs to the class I-like SAM-binding methyltransferase superfamily. Cation-independent O-methyltransferase family. Highly expressed in anthers, pistils, developing siliques, and developing seeds.

It is found in the cytoplasm. The protein localises to the cytosol. It carries out the reaction nicotinate + S-adenosyl-L-methionine = N-methylnicotinate + S-adenosyl-L-homocysteine. Involved in nicotinate detoxification in planta. Catalyzes the conversion of nicotinate to N-methylnicotinate, which is a detoxified form of endogenous nicotinate in planta. This chain is Nicotinate N-methyltransferase 1, found in Arabidopsis thaliana (Mouse-ear cress).